Reading from the N-terminus, the 458-residue chain is MALWGGRFTQAADSRFKSFNDSLRFDYRLAEQDIVGSIAWSKALVSVNVLSVQEQQQLEQALNHLLQSVQQDPEQILASDAEDIHSWVEQKLIEQVGDLGKKLHTGRSRNDQVATDLKLWCRDQGVHLLLALKTLQQQLVAVAAEHQSTVLPGYTHLQRAQPVTFTHWCLAYLEMFERDESRLTDALARLNTSPLGSGALAGTAYAIDREVLAADLGFTRATRNSLDAVSDRDHVMELMSVASISMLHLSRLAEDMIFYTTGEAGFIELADTVTSGSSLMPQKKNPDALELIRGKTGRVYGALAGMMMTVKALPLAYNKDMQEDKEGLFDALDTWFDCLQMAGLCFDGIKVNAARTLEAAKQGYSNATELADYLVAKGIPFREAHHIVGVAVVAAIGKGVALEELCLAELQQFSPLIEQDVYPILTIESCLEKRCALGGVSPKQVAHALQQAQARVKS.

It belongs to the lyase 1 family. Argininosuccinate lyase subfamily.

The protein resides in the cytoplasm. It carries out the reaction 2-(N(omega)-L-arginino)succinate = fumarate + L-arginine. It participates in amino-acid biosynthesis; L-arginine biosynthesis; L-arginine from L-ornithine and carbamoyl phosphate: step 3/3. This is Argininosuccinate lyase from Vibrio cholerae serotype O1 (strain ATCC 39541 / Classical Ogawa 395 / O395).